Reading from the N-terminus, the 361-residue chain is Septin-2 (361 aa).

Tyr-17 carries the post-translational modification Phosphotyrosine. Residues 34–306 enclose the Septin-type G domain; it reads KGFEFTLMVV…ENFRSERLKR (273 aa). Residues 44–51 are G1 motif; the sequence is GESGLGKS. Residues 44–51, Thr-78, Gly-104, and 183–191 contribute to the GTP site; these read GESGLGKS and KADTLTLKE. A G3 motif region spans residues 101–104; the sequence is DTPG. Positions 182 to 185 are G4 motif; that stretch reads AKAD. At Lys-190 the chain carries N6-acetyllysine. Tyr-211 bears the Phosphotyrosine mark. Ser-218 is modified (phosphoserine). 2 residues coordinate GTP: Gly-241 and Arg-256. The interval 260–270 is important for dimerization; it reads WGVVEVENPEH.

Belongs to the TRAFAC class TrmE-Era-EngA-EngB-Septin-like GTPase superfamily. Septin GTPase family. As to quaternary structure, septins polymerize into heterooligomeric protein complexes that form filaments, and associate with cellular membranes, actin filaments and microtubules. GTPase activity is required for filament formation. Septin filaments are assembled from asymmetrical heterotrimers, composed of SEPTIN2, SEPTIN6 and SEPTIN7 that associate head-to-head to form a hexameric unit. Interaction between SEPTIN2 and SEPTIN7 seems indirect. Also interacts with SEPTIN9 and SEPTIN5. Interaction with SEPTIN4 not detected. Component of a septin core octameric complex consisting of SEPTIN12, SEPTIN7, SEPTIN6 and SEPTIN2 or SEPTIN4 in the order 12-7-6-2-2-6-7-12 or 12-7-6-4-4-6-7-12 and located in the sperm annulus. Interacts with MAP4. Interacts with DZIP1L.

The protein localises to the cytoplasm. The protein resides in the cytoskeleton. It localises to the spindle. It is found in the cleavage furrow. Its subcellular location is the midbody. The protein localises to the cell cortex. The protein resides in the cell projection. It localises to the cilium membrane. It is found in the cilium. Its subcellular location is the flagellum. Functionally, filament-forming cytoskeletal GTPase. Forms a filamentous structure with SEPTIN12, SEPTIN6, SEPTIN2 and probably SEPTIN4 at the sperm annulus which is required for the structural integrity and motility of the sperm tail during postmeiotic differentiation. Required for normal organization of the actin cytoskeleton. Plays a role in the biogenesis of polarized columnar-shaped epithelium by maintaining polyglutamylated microtubules, thus facilitating efficient vesicle transport, and by impeding MAP4 binding to tubulin. Required for the progression through mitosis. Forms a scaffold at the midplane of the mitotic splindle required to maintain CENPE localization at kinetochores and consequently chromosome congression. During anaphase, may be required for chromosome segregation and spindle elongation. Plays a role in ciliogenesis and collective cell movements. In cilia, required for the integrity of the diffusion barrier at the base of the primary cilium that prevents diffusion of transmembrane proteins between the cilia and plasma membranes: probably acts by regulating the assembly of the tectonic-like complex (also named B9 complex) by localizing TMEM231 protein. This chain is Septin-2, found in Rattus norvegicus (Rat).